The following is a 380-amino-acid chain: Protein Wnt-5a (380 aa).

Residues 1 to 35 (MKKSIGILSPGVALGTAGSAMSSKFFVMALAVFFS) form the signal peptide. Residues 36–61 (FAQVVIEANSWWSLGMNNPVQMSEVY) constitute a propeptide that is removed on maturation. A disulfide bond links C104 and C115. N-linked (GlcNAc...) asparagine glycans are attached at residues N114 and N120. Disulfide bonds link C154-C162, C164-C182, C238-C252, C240-C247, C309-C340, C325-C335, C339-C379, C355-C370, C357-C367, and C362-C363. A lipid anchor (O-palmitoleoyl serine; by PORCN) is attached at S244. N312 and N326 each carry an N-linked (GlcNAc...) asparagine glycan.

The protein belongs to the Wnt family. Forms a soluble 1:1 complex with AFM; this prevents oligomerization and is required for prolonged biological activity. The complex with AFM may represent the physiological form in body fluids. Homooligomer; disulfide-linked, leading to inactivation (in vitro). Interacts with PORCN. Interacts with WLS. Interacts with glypican GCP3. Interacts with PKD1 (via extracellular domain). Interacts with TMEM67. Glycosylation is necessary for secretion but not for activity. In terms of processing, palmitoleoylation is required for efficient binding to frizzled receptors. Depalmitoleoylation leads to Wnt signaling pathway inhibition. Post-translationally, proteolytic processing by TIKI1 and TIKI2 promotes oxidation and formation of large disulfide-bond oligomers, leading to inactivation of WNT5A.

It is found in the secreted. The protein localises to the extracellular space. The protein resides in the extracellular matrix. In terms of biological role, ligand for members of the frizzled family of seven transmembrane receptors. Can activate or inhibit canonical Wnt signaling, depending on receptor context. In the presence of FZD4, activates beta-catenin signaling. In the presence of ROR2, inhibits the canonical Wnt pathway by promoting beta-catenin degradation through a GSK3-independent pathway which involves down-regulation of beta-catenin-induced reporter gene expression. Suppression of the canonical pathway allows chondrogenesis to occur. Inhibits tumor formation. Stimulates cell migration. Decreases proliferation, migration, invasiveness and clonogenicity of carcinoma cells and may act as a tumor suppressor. Mediates motility of melanoma cells. Required during embryogenesis for extension of the primary anterior-posterior axis and for outgrowth of limbs and the genital tubercle. Inhibits type II collagen expression in chondrocytes. The protein is Protein Wnt-5a of Oryctolagus cuniculus (Rabbit).